The sequence spans 166 residues: Deglycase PYRAB04690 (166 aa).

In terms of domain architecture, PfpI endopeptidase spans 1 to 166 (MRVLILSADQ…WMREFVKLLK (166 aa)). Histidine 101 is an active-site residue.

This sequence belongs to the peptidase C56 family. Homohexamer formed by a dimer of trimers that assemble into a hollow ring structure.

The protein resides in the cytoplasm. It carries out the reaction N(omega)-(1-hydroxy-2-oxopropyl)-L-arginyl-[protein] + H2O = lactate + L-arginyl-[protein] + H(+). The enzyme catalyses N(6)-(1-hydroxy-2-oxopropyl)-L-lysyl-[protein] + H2O = lactate + L-lysyl-[protein] + H(+). It catalyses the reaction S-(1-hydroxy-2-oxopropyl)-L-cysteinyl-[protein] + H2O = lactate + L-cysteinyl-[protein] + H(+). The catalysed reaction is N(omega)-(1-hydroxy-2-oxoethyl)-L-arginyl-[protein] + H2O = L-arginyl-[protein] + glycolate + H(+). It carries out the reaction N(6)-(1-hydroxy-2-oxoethyl)-L-lysyl-[protein] + H2O = glycolate + L-lysyl-[protein] + H(+). The enzyme catalyses S-(1-hydroxy-2-oxoethyl)-L-cysteinyl-[protein] + H2O = glycolate + L-cysteinyl-[protein] + H(+). Deglycase that catalyzes the deglycation of the Maillard adducts formed between amino groups of proteins and reactive carbonyl groups of glyoxals. Thus, functions as a protein deglycase that repairs methylglyoxal- and glyoxal-glycated proteins, and releases repaired proteins and lactate or glycolate, respectively. Deglycates cysteine, arginine and lysine residues in proteins, and thus reactivates these proteins by reversing glycation by glyoxals. Acts on early glycation intermediates (hemithioacetals and aminocarbinols), preventing the formation of advanced glycation endproducts (AGE) that cause irreversible damage. Also displays proteolytic activity. In Pyrococcus abyssi (strain GE5 / Orsay), this protein is Deglycase PYRAB04690.